The chain runs to 396 residues: Imidazolonepropionase (396 aa).

Fe(3+)-binding residues include His-70 and His-72. His-70 and His-72 together coordinate Zn(2+). 4-imidazolone-5-propanoate contacts are provided by Arg-79, Tyr-137, and His-164. Position 137 (Tyr-137) interacts with N-formimidoyl-L-glutamate. His-227 serves as a coordination point for Fe(3+). His-227 is a binding site for Zn(2+). Residue Gln-230 participates in 4-imidazolone-5-propanoate binding. Asp-301 contributes to the Fe(3+) binding site. Asp-301 lines the Zn(2+) pocket. Residues Asn-303 and Gly-305 each contribute to the N-formimidoyl-L-glutamate site. Residue Ser-306 participates in 4-imidazolone-5-propanoate binding.

This sequence belongs to the metallo-dependent hydrolases superfamily. HutI family. The cofactor is Zn(2+). Fe(3+) is required as a cofactor.

Its subcellular location is the cytoplasm. It carries out the reaction 4-imidazolone-5-propanoate + H2O = N-formimidoyl-L-glutamate. It participates in amino-acid degradation; L-histidine degradation into L-glutamate; N-formimidoyl-L-glutamate from L-histidine: step 3/3. Functionally, catalyzes the hydrolytic cleavage of the carbon-nitrogen bond in imidazolone-5-propanoate to yield N-formimidoyl-L-glutamate. It is the third step in the universal histidine degradation pathway. This Mycolicibacterium smegmatis (strain ATCC 700084 / mc(2)155) (Mycobacterium smegmatis) protein is Imidazolonepropionase.